The following is a 293-amino-acid chain: Mediator of RNA polymerase II transcription subunit 27 (293 aa).

Belongs to the Mediator complex subunit 27 family. Component of the Mediator complex, which includes at least CDK8, MED4, MED6, MED11, MED14, MED17, MED18, MED20, MED21, MED22, MED27, MED28, MED30 and MED31.

Its subcellular location is the nucleus. Its function is as follows. Component of the Mediator complex, a coactivator involved in the regulated transcription of nearly all RNA polymerase II-dependent genes. Mediator functions as a bridge to convey information from gene-specific regulatory proteins to the basal RNA polymerase II transcription machinery. Mediator is recruited to promoters by direct interactions with regulatory proteins and serves as a scaffold for the assembly of a functional preinitiation complex with RNA polymerase II and the general transcription factors. Required for activated transcription of the MtnA gene. This Drosophila melanogaster (Fruit fly) protein is Mediator of RNA polymerase II transcription subunit 27 (MED27).